A 355-amino-acid polypeptide reads, in one-letter code: MQRKLIEIERRYDELTQLLSDPEVIGNQSEWQKYAKAQAGMTDIVEAFREYSEVVKHLEETQGLLEEKLDPEFKEMAELELEELTEKRDELEEKMRILLLPKDPNDDKNVIMEIRAGAGGEEAALFAGDLYRMYTKYAEHQGWRTELLSASYTDIGGFKEIIFLIEGQGAYSKLKFESGVHRVQRVPTTESGGRIHTSTTTVAVLPEAEEVDVAINPNDLRIDIFCSSGPGGQSVNTTQSAVRITHVPTGTVVSCQDEKSQLKNKEKALRVLRARLLERAQEEAMGELASERRSQVGTGDRSERIRTYNFPQGRVTDHRIGLTLHRLDSILLGELDEVINALITTDQAERLKSEA.

Glutamine 233 is subject to N5-methylglutamine.

Belongs to the prokaryotic/mitochondrial release factor family. Methylated by PrmC. Methylation increases the termination efficiency of RF1.

The protein resides in the cytoplasm. Its function is as follows. Peptide chain release factor 1 directs the termination of translation in response to the peptide chain termination codons UAG and UAA. The protein is Peptide chain release factor 1 of Desulfitobacterium hafniense (strain DSM 10664 / DCB-2).